The sequence spans 261 residues: Probable septum site-determining protein MinC (261 aa).

This sequence belongs to the MinC family. In terms of assembly, interacts with MinD and FtsZ.

Functionally, cell division inhibitor that blocks the formation of polar Z ring septums. Rapidly oscillates between the poles of the cell to destabilize FtsZ filaments that have formed before they mature into polar Z rings. Prevents FtsZ polymerization. This Burkholderia cenocepacia (strain ATCC BAA-245 / DSM 16553 / LMG 16656 / NCTC 13227 / J2315 / CF5610) (Burkholderia cepacia (strain J2315)) protein is Probable septum site-determining protein MinC.